The primary structure comprises 246 residues: Small ribosomal subunit protein uS2 (246 aa).

Belongs to the universal ribosomal protein uS2 family.

The polypeptide is Small ribosomal subunit protein uS2 (Exiguobacterium sp. (strain ATCC BAA-1283 / AT1b)).